Reading from the N-terminus, the 426-residue chain is Pannexin-1 (426 aa).

At 1 to 40 the chain is on the cytoplasmic side; it reads MAIAHLATEYVFSDFLLKEPTEPKFKGLRLELAVDKMVTC. Cysteine 40 is subject to S-nitrosocysteine. A helical membrane pass occupies residues 41-61; the sequence is IAVGLPLLLISLAFAQEISIG. Over 62-106 the chain is Extracellular; sequence TQISCFSPSSFSWRQAAFVDSYCWAAVQQKNSLQSESGNLPLWLH. 2 disulfides stabilise this stretch: cysteine 66–cysteine 264 and cysteine 84–cysteine 245. The chain crosses the membrane as a helical span at residues 107–127; it reads KFFPYILLLFAILLYLPALFW. Topologically, residues 128–216 are cytoplasmic; it reads RFAAAPHLCS…HLIMKYISCR (89 aa). Tyrosine 198 bears the Phosphotyrosine mark. The helical transmembrane segment at 217–237 threads the bilayer; sequence LVTFAVVLLACIYLSYYFSLS. At 238–277 the chain is on the extracellular side; the sequence is SLSDEFLCSIKSGVLRNDSTIPDSFQCKLIAVGIFQLLSL. A glycan (N-linked (GlcNAc...) asparagine) is linked at asparagine 254. The helical transmembrane segment at 278–298 threads the bilayer; the sequence is INLLVYALLVPVVIYTLFVPF. At 299–426 the chain is on the cytoplasmic side; sequence RQKTDVLKVY…SRQRLLNSSC (128 aa). Cysteine 346 bears the S-nitrosocysteine mark. The interval 407 to 426 is disordered; sequence ETAANNGEKNSRQRLLNSSC.

Belongs to the pannexin family. In terms of assembly, homoheptameric. Post-translationally, S-nitrosylation inhibits channel currents and ATP release. In terms of processing, N-glycosylation plays a role in cell surface targeting. Glycosylation at its extracellular surface makes unlikely that two oligomers could dock to form an intercellular channel such as in gap junctions. Exists in three glycosylation states: non-glycosylated (GLY0), high-mannose glycosylated (GLY1), and fully mature glycosylated (GLY2). Cleaved by CASP3 and CASP7 during apoptosis. Cleavage opens the channel for the release of metabolites and induces plasma membrane permeability during apoptosis. Post-translationally, phosphorylated at Tyr-198 by SRC. Phosphorylation activates ATP release. Constitutively phosphorylated in vascular smooth muscle cells. In terms of tissue distribution, expressed in the eye, thyroid, prostate, kidney and liver. Abundantly expressed in the CNS, including hippocampus, olfactory bulb, cortex, cerebellum and white matter.

The protein localises to the cell membrane. It localises to the endoplasmic reticulum membrane. The enzyme catalyses Ca(2+)(in) = Ca(2+)(out). It carries out the reaction ATP(in) = ATP(out). It catalyses the reaction K(+)(in) = K(+)(out). The catalysed reaction is chloride(in) = chloride(out). The enzyme catalyses iodide(out) = iodide(in). It carries out the reaction Na(+)(in) = Na(+)(out). It catalyses the reaction nitrate(in) = nitrate(out). The catalysed reaction is L-aspartate(out) = L-aspartate(in). The enzyme catalyses L-glutamate(out) = L-glutamate(in). It carries out the reaction D-gluconate(in) = D-gluconate(out). It catalyses the reaction spermidine(in) = spermidine(out). Functionally, ion channel involved in a variety of physiological functions such as blood pressure regulation, apoptotic cell clearance and oogenesis. Forms anion-selective channels with relatively low conductance and an order of permeabilities: nitrate&gt;iodide&gt;chlroride&gt;&gt;aspartate=glutamate=gluconate. Can release ATP upon activation through phosphorylation or cleavage at C-terminus. May play a role as a Ca(2+)-leak channel to regulate ER Ca(2+) homeostasis. In terms of biological role, during apoptosis, the C terminal tail is cleaved by caspases, which opens the main pore acting as a large-pore ATP efflux channel with a broad distribution, which allows the regulated release of molecules and ions smaller than 1 kDa, such as nucleotides ATP and UTP, and selective plasma membrane permeability to attract phagocytes that engulf the dying cells. The chain is Pannexin-1 (Panx1) from Rattus norvegicus (Rat).